Reading from the N-terminus, the 56-residue chain is Putative zinc-binding protein YnfU (56 aa).

Positions 19, 22, 41, and 44 each coordinate Zn(2+).

Requires Zn(2+) as cofactor.

This Escherichia coli (strain K12) protein is Putative zinc-binding protein YnfU.